The primary structure comprises 364 residues: Thymidine kinase (364 aa).

36–43 (GPFGVGKT) contributes to the ATP binding site. Residue Glu-64 is the Proton acceptor of the active site. Gln-108 is a substrate binding site. Arg-201 serves as a coordination point for ATP. Arg-207 is a binding site for substrate.

The protein belongs to the herpesviridae thymidine kinase family. In terms of assembly, homodimer.

The catalysed reaction is thymidine + ATP = dTMP + ADP + H(+). Catalyzes the transfer of the gamma-phospho group of ATP to thymidine to generate dTMP in the salvage pathway of pyrimidine synthesis. The dTMP serves as a substrate for DNA polymerase during viral DNA replication. Allows the virus to be reactivated and to grow in non-proliferative cells lacking a high concentration of phosphorylated nucleic acid precursors. The protein is Thymidine kinase of Infectious laryngotracheitis virus (strain Thorne V882) (ILTV).